The chain runs to 493 residues: Uridine 5'-monophosphate synthase (493 aa).

An OPRTase region spans residues Met1–Ile207. The interval Asn208–Thr233 is domain linker. The tract at residues Tyr234 to Lys493 is OMPdecase. The active site involves Lys320.

The protein in the N-terminal section; belongs to the purine/pyrimidine phosphoribosyltransferase family. This sequence in the C-terminal section; belongs to the OMP decarboxylase family.

It catalyses the reaction orotidine 5'-phosphate + diphosphate = orotate + 5-phospho-alpha-D-ribose 1-diphosphate. The catalysed reaction is orotidine 5'-phosphate + H(+) = UMP + CO2. The protein operates within pyrimidine metabolism; UMP biosynthesis via de novo pathway; UMP from orotate: step 1/2. It functions in the pathway pyrimidine metabolism; UMP biosynthesis via de novo pathway; UMP from orotate: step 2/2. This Drosophila melanogaster (Fruit fly) protein is Uridine 5'-monophosphate synthase (r-l).